We begin with the raw amino-acid sequence, 540 residues long: MVVQNNFLFIAFIFVTFMMLDAWQSESYDYKSLDKNHIIEKKNIENKNINKEVFSRENYITVITDLFILKINTYGGDIEEASLRTYLSNTKNNLPLKILDRSKNFIYKLKSGFITKNDHDINNLIHIPNFISDKKLYILEDNSDYLQVPLFYNGENGLKYVKNFIFKKNSFSLKINYSIKNTNKDKMEMMFFGQLEQSIKDQEINNGYNFNFHTYRGAAYSSDNNKYKKYDFSEISNDKNLNVITSNGWIAMLQQYFIVAWIPKIENKYKFYTKNIPKDEKVSIGFQSELFSIDQEEEKNIESTLWIGPKLQDKMYEVDANLGLTVDYGWLWFIAQPLLQLLKFIYKYINNWGISIIIITFMVRGIMFPLTKAQYTSMAKMRILQPKIIEIKNKFSNDKKRQSKEMMSLYKKQKVNPLGGCMPLIIQMPIFLALYYMLSGSVELRHAHFVLWINDLSSKDPYYILPIIMGITMFLIQKISPSSISDPVQKKIVSFMPLIFTIFFLWFPSGLVLYYIISNLVTIIQQYIIYKDLKKVGILI.

Transmembrane regions (helical) follow at residues 1 to 21, 351 to 371, 418 to 438, 464 to 484, and 497 to 517; these read MVVQ…MMLD, NWGI…FPLT, LGGC…YYML, ILPI…PSSI, and PLIF…YYII.

This sequence belongs to the OXA1/ALB3/YidC family. Type 1 subfamily. In terms of assembly, interacts with the Sec translocase complex via SecD. Specifically interacts with transmembrane segments of nascent integral membrane proteins during membrane integration.

The protein resides in the cell membrane. In terms of biological role, required for the insertion and/or proper folding and/or complex formation of integral membrane proteins into the membrane. Involved in integration of membrane proteins that insert both dependently and independently of the Sec translocase complex, as well as at least some lipoproteins. Aids folding of multispanning membrane proteins. The chain is Membrane protein insertase YidC from Wigglesworthia glossinidia brevipalpis.